We begin with the raw amino-acid sequence, 554 residues long: 3-(3-hydroxy-phenyl)propionate/3-hydroxycinnamic acid hydroxylase (554 aa).

FAD-binding positions include 17–46 (QVAI…VVEK) and 285–295 (FRIDRVLLAGD).

The protein belongs to the PheA/TfdB FAD monooxygenase family. FAD is required as a cofactor.

The catalysed reaction is 3-(3-hydroxyphenyl)propanoate + NADH + O2 + H(+) = 3-(2,3-dihydroxyphenyl)propanoate + NAD(+) + H2O. The enzyme catalyses (2E)-3-(3-hydroxyphenyl)prop-2-enoate + NADH + O2 + H(+) = (2E)-3-(2,3-dihydroxyphenyl)prop-2-enoate + NAD(+) + H2O. It functions in the pathway aromatic compound metabolism; 3-phenylpropanoate degradation. Its function is as follows. Catalyzes the insertion of one atom of molecular oxygen into position 2 of the phenyl ring of 3-(3-hydroxyphenyl)propionate (3-HPP) and hydroxycinnamic acid (3HCI). This is 3-(3-hydroxy-phenyl)propionate/3-hydroxycinnamic acid hydroxylase from Escherichia coli O139:H28 (strain E24377A / ETEC).